Reading from the N-terminus, the 194-residue chain is Holliday junction branch migration complex subunit RuvA (194 aa).

The domain I stretch occupies residues 1-64; the sequence is MIARLSGILV…EDAQLLYGFG (64 aa). Residues 65-141 form a domain II region; sequence SDQERATFRQ…FAIDGGTALA (77 aa). The tract at residues 141–144 is flexible linker; the sequence is AGSN. Positions 145 to 194 are domain III; the sequence is PAKSASSDVLNALLALGYNEREALAAVKQLPADIAVAEGIKLSLKSLSKT.

It belongs to the RuvA family. In terms of assembly, homotetramer. Forms an RuvA(8)-RuvB(12)-Holliday junction (HJ) complex. HJ DNA is sandwiched between 2 RuvA tetramers; dsDNA enters through RuvA and exits via RuvB. An RuvB hexamer assembles on each DNA strand where it exits the tetramer. Each RuvB hexamer is contacted by two RuvA subunits (via domain III) on 2 adjacent RuvB subunits; this complex drives branch migration. In the full resolvosome a probable DNA-RuvA(4)-RuvB(12)-RuvC(2) complex forms which resolves the HJ.

It localises to the cytoplasm. The RuvA-RuvB-RuvC complex processes Holliday junction (HJ) DNA during genetic recombination and DNA repair, while the RuvA-RuvB complex plays an important role in the rescue of blocked DNA replication forks via replication fork reversal (RFR). RuvA specifically binds to HJ cruciform DNA, conferring on it an open structure. The RuvB hexamer acts as an ATP-dependent pump, pulling dsDNA into and through the RuvAB complex. HJ branch migration allows RuvC to scan DNA until it finds its consensus sequence, where it cleaves and resolves the cruciform DNA. This Methylobacillus flagellatus (strain ATCC 51484 / DSM 6875 / VKM B-1610 / KT) protein is Holliday junction branch migration complex subunit RuvA.